We begin with the raw amino-acid sequence, 373 residues long: CASP-like protein UU6 (373 aa).

2 disordered regions span residues 1-100 and 172-195; these read MGTL…GSEG and TKET…PKKK. Residues 1–204 are Cytoplasmic-facing; it reads MGTLTDPTVD…KHRLRKHLTA (204 aa). Residues 56–74 show a composition bias toward polar residues; it reads KTNTGNAAESTASTENGET. A helical membrane pass occupies residues 205–225; it reads IGAYSFAFRFSETVLSLIAIV. Over 226-253 the chain is Extracellular; the sequence is VMCSTRGSMRTDGVDFGTLKFNHFQAYR. A helical membrane pass occupies residues 254–274; sequence YLVAVNVIVFVYSTFQFIQLL. Residues 275–276 lie on the Cytoplasmic side of the membrane; it reads YT. A helical membrane pass occupies residues 277–297; the sequence is VILGISFIPSIFISTWMTFGF. Topologically, residues 298–342 are extracellular; it reads DQLFLYLLLSASTSAATVANMSYTGEMGIQLCSRFDVGSFCSKAD. N-linked (GlcNAc...) asparagine glycosylation is present at N317. The helical transmembrane segment at 343–363 threads the bilayer; sequence VAVTMSFFAVLAMLSSTILAI. Topologically, residues 364–373 are cytoplasmic; that stretch reads YRIAVLLREY.

It belongs to the Casparian strip membrane proteins (CASP) family. As to quaternary structure, homodimer and heterodimers.

The protein localises to the cell membrane. This chain is CASP-like protein UU6, found in Physcomitrium patens (Spreading-leaved earth moss).